Consider the following 166-residue polypeptide: Spiderine-1b (166 aa).

The N-terminal stretch at 1-18 (MKFALVLLGICAFYLVNA) is a signal peptide. Positions 19-58 (TGDLETELEASELQELQEALDLIGETSLESLEAEELEEAR) are cleaved as a propeptide — removed in mature form. The interval 59–99 (KFKWGKLFSAAKKLYKKGKKLSKNKNFKKALKFGKQLAKNL) is linear cationic cytotoxin domain. The Oxytoxin-type inhibitor cystine knot (ICK) domain occupies 113–166 (NNKCWAIGTTCSDDCDCCPEHHCHCPAGKWLPGLFRCTCQVTESDKVNKCPPAE). 5 disulfides stabilise this stretch: cysteine 116-cysteine 130, cysteine 123-cysteine 135, cysteine 127-cysteine 162, cysteine 129-cysteine 151, and cysteine 137-cysteine 149.

This sequence belongs to the spiderine family. Cationic/spiderine subfamily. As to expression, expressed by the venom gland.

The protein localises to the secreted. Functionally, has antimicrobial, insecticidal, cytolytic and cytotoxic activity. This Oxyopes takobius (Lynx spider) protein is Spiderine-1b.